Reading from the N-terminus, the 740-residue chain is NAD(P)H-quinone oxidoreductase subunit 5, chloroplastic (740 aa).

16 helical membrane passes run 9 to 29, 39 to 59, 89 to 109, 125 to 145, 147 to 167, 185 to 205, 231 to 251, 259 to 279, 281 to 301, 328 to 348, 355 to 375, 397 to 417, 426 to 446, 548 to 568, 607 to 627, and 719 to 739; these read WIIP…LLLI, IWAF…TKLA, IDPL…MVLI, FAYM…PNLI, IHIF…FWFT, GDFG…SFEF, AFLL…HVWL, TPIS…FLVA, LLPL…IGLI, LGYI…FHLI, ALLF…VGYS, TTFF…CFWS, WLYS…TAFY, TMLF…CIGI, FYSV…YGSV, and GRIS…LLLV.

The protein belongs to the complex I subunit 5 family. NDH is composed of at least 16 different subunits, 5 of which are encoded in the nucleus.

It localises to the plastid. The protein localises to the chloroplast thylakoid membrane. It catalyses the reaction a plastoquinone + NADH + (n+1) H(+)(in) = a plastoquinol + NAD(+) + n H(+)(out). The enzyme catalyses a plastoquinone + NADPH + (n+1) H(+)(in) = a plastoquinol + NADP(+) + n H(+)(out). Its function is as follows. NDH shuttles electrons from NAD(P)H:plastoquinone, via FMN and iron-sulfur (Fe-S) centers, to quinones in the photosynthetic chain and possibly in a chloroplast respiratory chain. The immediate electron acceptor for the enzyme in this species is believed to be plastoquinone. Couples the redox reaction to proton translocation, and thus conserves the redox energy in a proton gradient. This is NAD(P)H-quinone oxidoreductase subunit 5, chloroplastic (ndhF) from Nuphar advena (Common spatterdock).